A 303-amino-acid polypeptide reads, in one-letter code: Tyrosine recombinase XerC (303 aa).

The Core-binding (CB) domain occupies 6-92 (ASLAPQVEAF…ALRSFLNWLV (87 aa)). Residues 113–292 (HLPKNIDVDE…DFQHLATVYD (180 aa)) enclose the Tyr recombinase domain. Residues arginine 152, lysine 176, histidine 244, arginine 247, and histidine 270 contribute to the active site. Catalysis depends on tyrosine 279, which acts as the O-(3'-phospho-DNA)-tyrosine intermediate.

It belongs to the 'phage' integrase family. XerC subfamily. In terms of assembly, forms a cyclic heterotetrameric complex composed of two molecules of XerC and two molecules of XerD, in which XerC interacts with XerD via its C-terminal region, XerD interacts with XerC via its C-terminal region and so on.

Its subcellular location is the cytoplasm. With respect to regulation, ftsK may regulate the catalytic switch between XerC and XerD in the heterotetrameric complex during the two steps of the recombination process. Its function is as follows. Site-specific tyrosine recombinase, which acts by catalyzing the cutting and rejoining of the recombining DNA molecules. Binds cooperatively to specific DNA consensus sequences that are separated from XerD binding sites by a short central region, forming the heterotetrameric XerC-XerD complex that recombines DNA substrates. The complex is essential to convert dimers of the bacterial chromosome into monomers to permit their segregation at cell division. It also contributes to the segregational stability of plasmids. In the complex XerC specifically exchanges the top DNA strands. The sequence is that of Tyrosine recombinase XerC from Yersinia pestis.